The chain runs to 860 residues: DNA mismatch repair protein MutS (860 aa).

607–614 (GPNMSGKS) is an ATP binding site.

This sequence belongs to the DNA mismatch repair MutS family.

This protein is involved in the repair of mismatches in DNA. It is possible that it carries out the mismatch recognition step. This protein has a weak ATPase activity. This Listeria welshimeri serovar 6b (strain ATCC 35897 / DSM 20650 / CCUG 15529 / CIP 8149 / NCTC 11857 / SLCC 5334 / V8) protein is DNA mismatch repair protein MutS.